Consider the following 279-residue polypeptide: NAD kinase (279 aa).

Asp63 serves as the catalytic Proton acceptor. NAD(+)-binding positions include 63-64 (DG), Arg68, 133-134 (NE), and Asp163.

This sequence belongs to the NAD kinase family. It depends on a divalent metal cation as a cofactor.

Its subcellular location is the cytoplasm. It catalyses the reaction NAD(+) + ATP = ADP + NADP(+) + H(+). Involved in the regulation of the intracellular balance of NAD and NADP, and is a key enzyme in the biosynthesis of NADP. Catalyzes specifically the phosphorylation on 2'-hydroxyl of the adenosine moiety of NAD to yield NADP. The chain is NAD kinase from Protochlamydia amoebophila (strain UWE25).